A 749-amino-acid polypeptide reads, in one-letter code: Semaphorin-3B (749 aa).

The first 24 residues, 1–24 (MGRAGAAAVIPGLALLWAVGLGSA), serve as a signal peptide directing secretion. Residues 30–513 (RLRLSFQELQ…SRSAVAQIAL (484 aa)) enclose the Sema domain. The N-linked (GlcNAc...) asparagine glycan is linked to Asn82. A disulfide bond links Cys102 and Cys113. N-linked (GlcNAc...) asparagine glycosylation occurs at Asn124. Intrachain disulfides connect Cys131–Cys140, Cys269–Cys380, and Cys293–Cys340. N-linked (GlcNAc...) asparagine glycosylation is present at Asn427. 2 cysteine pairs are disulfide-bonded: Cys516-Cys534 and Cys644-Cys710. Positions 573–659 (PALLEHKVFG…GFTQPLRRLS (87 aa)) constitute an Ig-like C2-type domain. The interval 702 to 749 (GSANSLRMCRPQPALQSLPLESRRKGRNRRTHAPEPRAERGPRSATHW) is disordered. Basic and acidic residues predominate over residues 733 to 743 (HAPEPRAERGP).

The protein belongs to the semaphorin family. As to expression, expressed abundantly but differentially in a variety of neural and nonneural tissues.

The protein localises to the secreted. The protein resides in the endoplasmic reticulum. Its function is as follows. Inhibits axonal extension by providing local signals to specify territories inaccessible for growing axons. In Homo sapiens (Human), this protein is Semaphorin-3B (SEMA3B).